Consider the following 283-residue polypeptide: Thymidylate synthase (283 aa).

R22 contacts dUMP. C160 functions as the Nucleophile in the catalytic mechanism. DUMP is bound by residues 180 to 183 (RSCD), N191, and 221 to 223 (HIY). D183 serves as a coordination point for (6R)-5,10-methylene-5,6,7,8-tetrahydrofolate. A (6R)-5,10-methylene-5,6,7,8-tetrahydrofolate-binding site is contributed by S282.

This sequence belongs to the thymidylate synthase family. Bacterial-type ThyA subfamily. Homodimer.

Its subcellular location is the cytoplasm. The catalysed reaction is dUMP + (6R)-5,10-methylene-5,6,7,8-tetrahydrofolate = 7,8-dihydrofolate + dTMP. It functions in the pathway pyrimidine metabolism; dTTP biosynthesis. Functionally, catalyzes the reductive methylation of 2'-deoxyuridine-5'-monophosphate (dUMP) to 2'-deoxythymidine-5'-monophosphate (dTMP) while utilizing 5,10-methylenetetrahydrofolate (mTHF) as the methyl donor and reductant in the reaction, yielding dihydrofolate (DHF) as a by-product. This enzymatic reaction provides an intracellular de novo source of dTMP, an essential precursor for DNA biosynthesis. The chain is Thymidylate synthase from Haemophilus influenzae (strain PittGG).